Here is a 382-residue protein sequence, read N- to C-terminus: Gap junction alpha-1 protein (382 aa).

Topologically, residues 2-23 (GDWSALGKLLDKVQAYSTAGGK) are cytoplasmic. Ser5 carries the phosphoserine modification. The chain crosses the membrane as a helical span at residues 24–44 (VWLSVLFIFRILLLGTAVESA). The Extracellular portion of the chain corresponds to 45 to 76 (WGDEQSAFRCNTQQPGCENVCYDKSFPISHVR). Intrachain disulfides connect Cys54–Cys192 and Cys187–Cys198. The chain crosses the membrane as a helical span at residues 77 to 97 (FWVLQIIFVSVPTLLYLAHVF). Topologically, residues 98–155 (YVMRKEEKLNKKEEELKVAQTDGVNVEMHLKQIEIKKFKYGIEEHGKVKMRGGLLRTY) are cytoplasmic. Lys144 participates in a covalent cross-link: Glycyl lysine isopeptide (Lys-Gly) (interchain with G-Cter in SUMO). A helical membrane pass occupies residues 156–176 (IISILFKSIFEVAFLLIQWYI). Residues 177-207 (YGFSLSAVYTCKRDPCPHQVDCFLSRPTEKT) lie on the Extracellular side of the membrane. Residues 208–228 (IFIIFMLVVSLVSLALNIIEL) form a helical membrane-spanning segment. Residues 229–382 (FYVFFKGVKD…SRPRPDDLEI (154 aa)) are Cytoplasmic-facing. A Glycyl lysine isopeptide (Lys-Gly) (interchain with G-Cter in SUMO) cross-link involves residue Lys237. The interval 244 to 382 (SDPYHTTSGA…SRPRPDDLEI (139 aa)) is interaction with NOV. The residue at position 247 (Tyr247) is a Phosphotyrosine. 2 positions are modified to phosphoserine: Ser255 and Ser262. An interaction with UBQLN4 region spans residues 264–382 (KYAYFNGCSS…SRPRPDDLEI (119 aa)). An S-nitrosocysteine modification is found at Cys271. At Thr275 the chain carries Phosphothreonine. Phosphoserine occurs at positions 306 and 314. Residues 317–332 (QNRMGQAGSTISNSHA) show a composition bias toward polar residues. The interval 317 to 382 (QNRMGQAGST…SRPRPDDLEI (66 aa)) is disordered. The residue at position 325 (Ser325) is a Phosphoserine; by CK1. Phosphothreonine is present on Thr326. 2 positions are modified to phosphoserine; by CK1: Ser328 and Ser330. Ser344 and Ser365 each carry phosphoserine. The segment covering 362–374 (RPSSRASSRASSR) has biased composition (low complexity). Ser368 is modified (phosphoserine; by PKC/PRKCG and PKC/PRKCD). 2 positions are modified to phosphoserine: Ser369 and Ser373.

It belongs to the connexin family. Alpha-type (group II) subfamily. In terms of assembly, a connexon is composed of a hexamer of connexins. Interacts with SGSM3. Interacts with RIC1/CIP150. Interacts with CNST and CSNK1D. Interacts (via C-terminus) with TJP1. Interacts (via C-terminus) with SRC (via SH3 domain). Interacts (not ubiquitinated) with UBQLN4 (via UBA domain). Interacts with NOV. Interacts with TMEM65. Interacts with ANK3/ANKG and PKP2. Phosphorylation at Ser-325, Ser-328 and Ser-330 by CK1 modulates gap junction assembly. Phosphorylated at Ser-368 by PRKCG; phosphorylation induces disassembly of gap junction plaques and inhibition of gap junction activity. Phosphorylation at Ser-368 by PRKCD triggers its internalization into small vesicles leading to proteasome-mediated degradation. In terms of processing, sumoylated with SUMO1, SUMO2 and SUMO3, which may regulate the level of functional Cx43 gap junctions at the plasma membrane. May be desumoylated by SENP1 or SENP2. Post-translationally, S-nitrosylation at Cys-271 is enriched at the muscle endothelial gap junction in arteries, it augments channel permeability and may regulate of smooth muscle cell to endothelial cell communication. Acetylated in the developing cortex; leading to delocalization from the cell membrane.

The protein localises to the cell membrane. The protein resides in the cell junction. It localises to the gap junction. It is found in the endoplasmic reticulum. Gap junction protein that acts as a regulator of bladder capacity. A gap junction consists of a cluster of closely packed pairs of transmembrane channels, the connexons, through which materials of low MW diffuse from one cell to a neighboring cell. May play a critical role in the physiology of hearing by participating in the recycling of potassium to the cochlear endolymph. Negative regulator of bladder functional capacity: acts by enhancing intercellular electrical and chemical transmission, thus sensitizing bladder muscles to cholinergic neural stimuli and causing them to contract. May play a role in cell growth inhibition through the regulation of NOV expression and localization. Plays an essential role in gap junction communication in the ventricles. The protein is Gap junction alpha-1 protein (GJA1) of Chlorocebus aethiops (Green monkey).